Reading from the N-terminus, the 698-residue chain is Nitric oxide-associated protein 1 (698 aa).

The segment at 42-66 is disordered; it reads FQHSSSLGRELPYDPVDTEGFGEGG. At Tyr-77 the chain carries Phosphotyrosine. Disordered regions lie at residues 80 to 134 and 279 to 306; these read DPEP…DPAL and LAPG…PNWS. A compositionally biased stretch (basic and acidic residues) spans 102–126; it reads ERQRQQRREERRQQNLRARSREHPV. In terms of domain architecture, CP-type G spans 202–503; that stretch reads LELVSAALRR…FYDTPGITKE (302 aa).

This sequence belongs to the TRAFAC class YlqF/YawG GTPase family. NOA1 subfamily. As to quaternary structure, homodimer or multimer. Interacts with mitochondrial complex I, DAP3, MRPL12 and MRPS27.

It localises to the mitochondrion inner membrane. Functionally, involved in regulation of mitochondrial protein translation and respiration. Plays a role in mitochondria-mediated cell death. May act as a scaffolding protein or stabilizer of respiratory chain supercomplexes. Binds GTP. This is Nitric oxide-associated protein 1 (NOA1) from Homo sapiens (Human).